We begin with the raw amino-acid sequence, 195 residues long: Large ribosomal subunit protein uL18 (195 aa).

This sequence belongs to the universal ribosomal protein uL18 family. As to quaternary structure, part of the 50S ribosomal subunit. Contacts the 5S and 23S rRNAs.

This is one of the proteins that bind and probably mediate the attachment of the 5S RNA into the large ribosomal subunit, where it forms part of the central protuberance. The protein is Large ribosomal subunit protein uL18 of Methanocaldococcus jannaschii (strain ATCC 43067 / DSM 2661 / JAL-1 / JCM 10045 / NBRC 100440) (Methanococcus jannaschii).